Consider the following 460-residue polypeptide: Argininosuccinate lyase (460 aa).

Belongs to the lyase 1 family. Argininosuccinate lyase subfamily.

It is found in the cytoplasm. The enzyme catalyses 2-(N(omega)-L-arginino)succinate = fumarate + L-arginine. It participates in amino-acid biosynthesis; L-arginine biosynthesis; L-arginine from L-ornithine and carbamoyl phosphate: step 3/3. The chain is Argininosuccinate lyase from Leuconostoc mesenteroides subsp. mesenteroides (strain ATCC 8293 / DSM 20343 / BCRC 11652 / CCM 1803 / JCM 6124 / NCDO 523 / NBRC 100496 / NCIMB 8023 / NCTC 12954 / NRRL B-1118 / 37Y).